Consider the following 219-residue polypeptide: Uracil-DNA glycosylase (219 aa).

Asp61 serves as the catalytic Proton acceptor.

It belongs to the uracil-DNA glycosylase (UDG) superfamily. UNG family.

The protein resides in the cytoplasm. It catalyses the reaction Hydrolyzes single-stranded DNA or mismatched double-stranded DNA and polynucleotides, releasing free uracil.. Excises uracil residues from the DNA which can arise as a result of misincorporation of dUMP residues by DNA polymerase or due to deamination of cytosine. In Neisseria meningitidis serogroup C (strain 053442), this protein is Uracil-DNA glycosylase.